The chain runs to 254 residues: Dihydroorotate dehydrogenase B (NAD(+)), electron transfer subunit (254 aa).

The FAD-binding FR-type domain occupies 1-99 (MLQTEMKVIQ…LGPLGKGFDI (99 aa)). FAD-binding positions include 50–53 (RPIS), 67–69 (LYR), and 74–75 (GT). 4 residues coordinate [2Fe-2S] cluster: C218, C223, C226, and C241.

The protein belongs to the PyrK family. Heterotetramer of 2 PyrK and 2 PyrD type B subunits. [2Fe-2S] cluster is required as a cofactor. The cofactor is FAD.

Its pathway is pyrimidine metabolism; UMP biosynthesis via de novo pathway; orotate from (S)-dihydroorotate (NAD(+) route): step 1/1. Responsible for channeling the electrons from the oxidation of dihydroorotate from the FMN redox center in the PyrD type B subunit to the ultimate electron acceptor NAD(+). The sequence is that of Dihydroorotate dehydrogenase B (NAD(+)), electron transfer subunit from Listeria welshimeri serovar 6b (strain ATCC 35897 / DSM 20650 / CCUG 15529 / CIP 8149 / NCTC 11857 / SLCC 5334 / V8).